Here is a 476-residue protein sequence, read N- to C-terminus: Sulfate adenylyltransferase subunit 1 (476 aa).

A tr-type G domain is found at 17–232 (KDLLRLLTAG…LETVHIDSDN (216 aa)). The segment at 26–33 (GSVDDGKS) is G1. 26–33 (GSVDDGKS) serves as a coordination point for GTP. The G2 stretch occupies residues 84-88 (GITID). The interval 105–108 (DTPG) is G3. Residues 105-109 (DTPGH) and 160-163 (NKMD) contribute to the GTP site. The G4 stretch occupies residues 160 to 163 (NKMD). The interval 197–199 (SAL) is G5.

It belongs to the TRAFAC class translation factor GTPase superfamily. Classic translation factor GTPase family. CysN/NodQ subfamily. Heterodimer composed of CysD, the smaller subunit, and CysN.

It catalyses the reaction sulfate + ATP + H(+) = adenosine 5'-phosphosulfate + diphosphate. It participates in sulfur metabolism; hydrogen sulfide biosynthesis; sulfite from sulfate: step 1/3. Functionally, with CysD forms the ATP sulfurylase (ATPS) that catalyzes the adenylation of sulfate producing adenosine 5'-phosphosulfate (APS) and diphosphate, the first enzymatic step in sulfur assimilation pathway. APS synthesis involves the formation of a high-energy phosphoric-sulfuric acid anhydride bond driven by GTP hydrolysis by CysN coupled to ATP hydrolysis by CysD. In Bacteroides fragilis (strain YCH46), this protein is Sulfate adenylyltransferase subunit 1.